We begin with the raw amino-acid sequence, 305 residues long: Probable cell division protein WhiA (305 aa).

A DNA-binding region (H-T-H motif) is located at residues 272-305 (SIQQLADSLTVPITKSGVNHRLRKINKIADELTD).

Belongs to the WhiA family.

Its function is as follows. Involved in cell division and chromosome segregation. The polypeptide is Probable cell division protein WhiA (Streptococcus suis (strain 98HAH33)).